A 160-amino-acid polypeptide reads, in one-letter code: S-ribosylhomocysteine lyase (160 aa).

H57, H61, and C127 together coordinate Fe cation.

Belongs to the LuxS family. In terms of assembly, homodimer. The cofactor is Fe cation.

The enzyme catalyses S-(5-deoxy-D-ribos-5-yl)-L-homocysteine = (S)-4,5-dihydroxypentane-2,3-dione + L-homocysteine. Its function is as follows. Involved in the synthesis of autoinducer 2 (AI-2) which is secreted by bacteria and is used to communicate both the cell density and the metabolic potential of the environment. The regulation of gene expression in response to changes in cell density is called quorum sensing. Catalyzes the transformation of S-ribosylhomocysteine (RHC) to homocysteine (HC) and 4,5-dihydroxy-2,3-pentadione (DPD). The protein is S-ribosylhomocysteine lyase of Streptococcus thermophilus (strain CNRZ 1066).